Here is a 441-residue protein sequence, read N- to C-terminus: POC1 centriolar protein homolog A (441 aa).

WD repeat units follow at residues 16–55 (GHRD…RAYR), 58–97 (GHKD…ESTV), 100–139 (AHTG…FLFS), 142–181 (QHIN…CIHS), 184–223 (EHGG…LIQH), 226–265 (VHSG…LLYT), and 268–307 (GHQG…ASYA). Residues 323 to 380 (DYTSGVPAADRHRPERNAQTDQADDLEPRHIQMSAKDRSSPLSYTSRSIDQHHPQAED) are disordered. Composition is skewed to basic and acidic residues over residues 331 to 340 (ADRHRPERNA), 348 to 361 (LEPR…KDRS), and 371 to 380 (IDQHHPQAED). A coiled-coil region spans residues 400-427 (LTRTVGILEQRLSLTEDKLKECIDNQQA).

It belongs to the WD repeat POC1 family. Interacts with pat.

It localises to the cytoplasm. It is found in the cytoskeleton. In terms of biological role, may play an important role in centriole assembly and/or stability and ciliogenesis. This chain is POC1 centriolar protein homolog A (poc1a), found in Xenopus tropicalis (Western clawed frog).